Reading from the N-terminus, the 189-residue chain is Orotate phosphoribosyltransferase (189 aa).

5-phospho-alpha-D-ribose 1-diphosphate contacts are provided by residues Arg94, Lys95, Lys98, and 120–128 (EDVTTTGGS). Thr124 and Arg152 together coordinate orotate.

The protein belongs to the purine/pyrimidine phosphoribosyltransferase family. PyrE subfamily. Homodimer. Mg(2+) is required as a cofactor.

It catalyses the reaction orotidine 5'-phosphate + diphosphate = orotate + 5-phospho-alpha-D-ribose 1-diphosphate. The protein operates within pyrimidine metabolism; UMP biosynthesis via de novo pathway; UMP from orotate: step 1/2. Catalyzes the transfer of a ribosyl phosphate group from 5-phosphoribose 1-diphosphate to orotate, leading to the formation of orotidine monophosphate (OMP). The protein is Orotate phosphoribosyltransferase of Thermococcus gammatolerans (strain DSM 15229 / JCM 11827 / EJ3).